Here is a 551-residue protein sequence, read N- to C-terminus: MFS-type transporter ATEG_00331 (551 aa).

Positions M1 to A18 are cleaved as a signal peptide. 4 helical membrane-spanning segments follow: residues L40–W60, P71–I91, I102–F122, and G132–F152. Residues N165 and N178 are each glycosylated (N-linked (GlcNAc...) asparagine). The next 8 helical transmembrane spans lie at L179–V199, I206–F228, G233–G255, V324–I344, I354–Y374, I380–I400, T417–F437, and S493–S513. N-linked (GlcNAc...) asparagine glycosylation occurs at N524.

It belongs to the major facilitator superfamily. TCR/Tet family.

The protein localises to the membrane. In terms of biological role, MFS-type transporter; part of the gene cluster that mediates the biosynthesis of isoflavipucine. The polypeptide is MFS-type transporter ATEG_00331 (Aspergillus terreus (strain NIH 2624 / FGSC A1156)).